We begin with the raw amino-acid sequence, 577 residues long: Cytidine monophosphate-N-acetylneuraminic acid hydroxylase (577 aa).

The propeptide occupies 1–4 (MMDR). Residues 14 to 112 (LSPAEVANLK…IEMDENNGLS (99 aa)) enclose the Rieske domain. [2Fe-2S] cluster is bound by residues Cys54, His56, Cys75, and His78.

The protein belongs to the CMP-Neu5Ac hydroxylase family. The cofactor is [2Fe-2S] cluster. Expressed in all tissues tested, except in brain.

It is found in the cytoplasm. The protein resides in the endoplasmic reticulum. It catalyses the reaction CMP-N-acetyl-beta-neuraminate + 2 Fe(II)-[cytochrome b5] + O2 + 2 H(+) = CMP-N-glycoloyl-beta-neuraminate + 2 Fe(III)-[cytochrome b5] + H2O. The protein operates within amino-sugar metabolism; N-acetylneuraminate metabolism. Its function is as follows. Sialic acids are components of carbohydrate chains of glycoconjugates and are involved in cell-cell recognition and cell-pathogen interactions. Catalyzes the conversion of CMP-N-acetylneuraminic acid (CMP-Neu5Ac) into its hydroxylated derivative CMP-N-glycolylneuraminic acid (CMP-Neu5Gc), a sialic acid abundantly expressed at the surface of many cells. This Mus musculus (Mouse) protein is Cytidine monophosphate-N-acetylneuraminic acid hydroxylase (Cmah).